The chain runs to 218 residues: 3,4-dihydroxy-2-butanone 4-phosphate synthase (218 aa).

Residues 38–39 (RE), Asp43, 151–155 (RRGHT), and Glu175 contribute to the D-ribulose 5-phosphate site. Glu39 serves as a coordination point for Mg(2+). His154 is a binding site for Mg(2+).

Belongs to the DHBP synthase family. In terms of assembly, homodimer. The cofactor is Mg(2+). It depends on Mn(2+) as a cofactor.

It carries out the reaction D-ribulose 5-phosphate = (2S)-2-hydroxy-3-oxobutyl phosphate + formate + H(+). It functions in the pathway cofactor biosynthesis; riboflavin biosynthesis; 2-hydroxy-3-oxobutyl phosphate from D-ribulose 5-phosphate: step 1/1. Functionally, catalyzes the conversion of D-ribulose 5-phosphate to formate and 3,4-dihydroxy-2-butanone 4-phosphate. This is 3,4-dihydroxy-2-butanone 4-phosphate synthase from Vibrio atlanticus (strain LGP32) (Vibrio splendidus (strain Mel32)).